The primary structure comprises 147 residues: Hemoglobin subunit beta (147 aa).

The residue at position 2 (Val2) is an N-acetylvaline. In terms of domain architecture, Globin spans 3 to 147; sequence HLTGDEKAAV…VANALAHKYH (145 aa). Thr13 is subject to Phosphothreonine. Ser45 is modified (phosphoserine). Position 60 is an N6-acetyllysine (Lys60). His64 lines the heme b pocket. Lys83 is subject to N6-acetyllysine. A heme b-binding site is contributed by His93. Position 94 is an S-nitrosocysteine (Cys94). Lys145 is modified (N6-acetyllysine).

It belongs to the globin family. As to quaternary structure, heterotetramer of two alpha chains and two beta chains. In terms of tissue distribution, red blood cells.

Functionally, involved in oxygen transport from the lung to the various peripheral tissues. The sequence is that of Hemoglobin subunit beta (HBB) from Alouatta belzebul (Red-handed howler monkey).